The sequence spans 405 residues: Aspartokinase (405 aa).

ACT domains follow at residues 267-344 (VSME…AKVS) and 345-405 (IVGV…QLDQ).

This sequence belongs to the aspartokinase family.

The catalysed reaction is L-aspartate + ATP = 4-phospho-L-aspartate + ADP. It participates in amino-acid biosynthesis; L-lysine biosynthesis via DAP pathway; (S)-tetrahydrodipicolinate from L-aspartate: step 1/4. The protein operates within amino-acid biosynthesis; L-methionine biosynthesis via de novo pathway; L-homoserine from L-aspartate: step 1/3. Its pathway is amino-acid biosynthesis; L-threonine biosynthesis; L-threonine from L-aspartate: step 1/5. The protein is Aspartokinase (lysC) of Helicobacter pylori (strain ATCC 700392 / 26695) (Campylobacter pylori).